We begin with the raw amino-acid sequence, 89 residues long: Elongation factor 1-beta (89 aa).

It belongs to the EF-1-beta/EF-1-delta family.

Its function is as follows. Promotes the exchange of GDP for GTP in EF-1-alpha/GDP, thus allowing the regeneration of EF-1-alpha/GTP that could then be used to form the ternary complex EF-1-alpha/GTP/AAtRNA. This Methanobrevibacter smithii (strain ATCC 35061 / DSM 861 / OCM 144 / PS) protein is Elongation factor 1-beta.